The sequence spans 352 residues: C-C chemokine receptor type 5 (352 aa).

Over 1 to 30 (MDYQVSSPTYDIDYYTSEPCQKINVKQIAA) the chain is Extracellular. A Sulfotyrosine modification is found at Tyr3. O-linked (GalNAc...) serine glycans are attached at residues Ser6 and Ser7. Residues Tyr10, Tyr14, and Tyr15 each carry the sulfotyrosine modification. 2 cysteine pairs are disulfide-bonded: Cys20/Cys269 and Cys101/Cys178. Residues 31–58 (RLLPPLYSLVFIFGFVGNILVVLILINC) form a helical membrane-spanning segment. At 59-68 (KRLKSMTDIY) the chain is on the cytoplasmic side. Residues 69-89 (LLNLAISDLLFLLTVPFWAHY) form a helical membrane-spanning segment. Topologically, residues 90-102 (AAAQWDFGNTMCQ) are extracellular. The chain crosses the membrane as a helical span at residues 103 to 124 (LLTGLYFIGFFSGIFFIILLTI). Residues 125–141 (DRYLAIVHAVFALKART) are Cytoplasmic-facing. Residues 142-166 (VTFGVVTSVITWVVAVFASLPRIIF) traverse the membrane as a helical segment. The Extracellular segment spans residues 167-198 (TRSQREGLHYACSSHFPYSQYQFWKNFQTLKI). The helical transmembrane segment at 199–218 (VILGLVLPLLVMVICYSGIL) threads the bilayer. The Cytoplasmic portion of the chain corresponds to 219–235 (KTLLRCRNEKKRHRAVR). Residues 236–260 (LIFTIMIVYFLFWAPYNIVLLLNTF) traverse the membrane as a helical segment. Residues 261 to 277 (QEFFGLNNCSSSNRLDQ) lie on the Extracellular side of the membrane. The chain crosses the membrane as a helical span at residues 278–301 (AMQVTETLGMTHCCINPIIYAFVG). The Cytoplasmic portion of the chain corresponds to 302-352 (EKFRNYLLVFFQKHIAKRFCKCCSIFQQEAPERASSVYTRSTGEQEISVGL). S-palmitoyl cysteine attachment occurs at residues Cys321, Cys323, and Cys324. Phosphoserine; by BARK1 is present on residues Ser336, Ser337, Ser342, and Ser349.

This sequence belongs to the G-protein coupled receptor 1 family. As to quaternary structure, interacts with PRAF2. Efficient ligand binding to CCL3/MIP-1alpha and CCL4/MIP-1beta requires sulfation, O-glycosylation and sialic acid modifications. Glycosylation on Ser-6 is required for efficient binding of CCL4. Interacts with GRK2. Interacts with ARRB1 and ARRB2. Interacts with CNIH4. Interacts with S100A4; this interaction stimulates T-lymphocyte chemotaxis. Sulfated on at least 2 of the N-terminal tyrosines. Sulfation is required for efficient binding of the chemokines, CCL3 and CCL4. Post-translationally, palmitoylation in the C-terminal is important for cell surface expression. In terms of processing, phosphorylation on serine residues in the C-terminal is stimulated by binding CC chemokines especially by APO-RANTES. O-glycosylated, but not N-glycosylated. Ser-6 appears to be the major site even if Ser-7 may be also O-glycosylated. Also sialylated glycans present which contribute to chemokine binding. Thr-16 and Ser-17 may also be glycosylated and, if so, with small moieties such as a T-antigen.

The protein resides in the cell membrane. Receptor for a number of inflammatory CC-chemokines including CCL3/MIP-1-alpha, CCL4/MIP-1-beta and RANTES and subsequently transduces a signal by increasing the intracellular calcium ion level. May play a role in the control of granulocytic lineage proliferation or differentiation. Participates in T-lymphocyte migration to the infection site by acting as a chemotactic receptor. This is C-C chemokine receptor type 5 (CCR5) from Chlorocebus pygerythrus (Vervet monkey).